A 213-amino-acid polypeptide reads, in one-letter code: Pyrrolidone-carboxylate peptidase (213 aa).

Catalysis depends on residues E78, C141, and H165.

It belongs to the peptidase C15 family. Homotetramer.

It is found in the cytoplasm. It catalyses the reaction Release of an N-terminal pyroglutamyl group from a polypeptide, the second amino acid generally not being Pro.. In terms of biological role, removes 5-oxoproline from various penultimate amino acid residues except L-proline. In Finegoldia magna (strain ATCC 29328 / DSM 20472 / WAL 2508) (Peptostreptococcus magnus), this protein is Pyrrolidone-carboxylate peptidase.